The chain runs to 131 residues: Global transcriptional regulator Spx (131 aa).

Cys10 and Cys13 are disulfide-bonded.

This sequence belongs to the ArsC family. Spx subfamily. Interacts with the C-terminal domain of the alpha subunit of the RNAP.

It localises to the cytoplasm. Global transcriptional regulator that plays a key role in stress response and exerts either positive or negative regulation of genes. Acts by interacting with the C-terminal domain of the alpha subunit of the RNA polymerase (RNAP). This interaction can enhance binding of RNAP to the promoter region of target genes and stimulate their transcription, or block interaction of RNAP with activator. This chain is Global transcriptional regulator Spx, found in Staphylococcus haemolyticus (strain JCSC1435).